Reading from the N-terminus, the 163-residue chain is NADH-quinone oxidoreductase subunit I (163 aa).

4Fe-4S ferredoxin-type domains are found at residues Leu54–Asp84 and Thr94–Ile123. Residues Cys64, Cys67, Cys70, Cys74, Cys103, Cys106, Cys109, and Cys113 each contribute to the [4Fe-4S] cluster site.

Belongs to the complex I 23 kDa subunit family. NDH-1 is composed of 14 different subunits. Subunits NuoA, H, J, K, L, M, N constitute the membrane sector of the complex. It depends on [4Fe-4S] cluster as a cofactor.

It is found in the cell inner membrane. It catalyses the reaction a quinone + NADH + 5 H(+)(in) = a quinol + NAD(+) + 4 H(+)(out). Functionally, NDH-1 shuttles electrons from NADH, via FMN and iron-sulfur (Fe-S) centers, to quinones in the respiratory chain. The immediate electron acceptor for the enzyme in this species is believed to be ubiquinone. Couples the redox reaction to proton translocation (for every two electrons transferred, four hydrogen ions are translocated across the cytoplasmic membrane), and thus conserves the redox energy in a proton gradient. The sequence is that of NADH-quinone oxidoreductase subunit I from Cupriavidus metallidurans (strain ATCC 43123 / DSM 2839 / NBRC 102507 / CH34) (Ralstonia metallidurans).